The chain runs to 250 residues: Adapter protein MecA (250 aa).

Belongs to the MecA family. As to quaternary structure, homodimer.

Its function is as follows. Enables the recognition and targeting of unfolded and aggregated proteins to the ClpC protease or to other proteins involved in proteolysis. This chain is Adapter protein MecA, found in Streptococcus sanguinis (strain SK36).